The following is a 359-amino-acid chain: CCAAT/enhancer-binding protein alpha (359 aa).

Residues 1–55 (MESADFYEVEPRPPMSSHLQSPPHAPSNAAFGFPRGAGPAPPPAPPAAPEPLGGI) form a disordered region. The tract at residues 1-70 (MESADFYEVE…SIDISAYIDP (70 aa)) is required to repress E2F1:TFDP1-mediated transcription, to inhibit cell cycle and to induce adipocyte differentiation. A compositionally biased stretch (low complexity) spans 29-38 (AAFGFPRGAG). A compositionally biased stretch (pro residues) spans 39-49 (PAPPPAPPAAP). The segment at 54–72 (GICEHETSIDISAYIDPAA) is required for interaction with TRIB1. Residues 126–200 (PPGYGCAAAG…HASPAHLAAP (75 aa)) form a required to induce adipocyte differentiation region. An N6-acetyllysine; alternate modification is found at lysine 159. A Glycyl lysine isopeptide (Lys-Gly) (interchain with G-Cter in SUMO); alternate cross-link involves residue lysine 159. Lysine 159 participates in a covalent cross-link: Glycyl lysine isopeptide (Lys-Gly) (interchain with G-Cter in SUMO2); alternate. Disordered stretches follow at residues 176–195 (LFPY…ASPA) and 213–293 (TMHL…RERN). The span at 179–191 (YQPPPPPPPPHPH) shows a compositional bias: pro residues. Residues 180–194 (QPPPPPPPPHPHASP) form a required to functionally cooperate with SREBF1 in promoter activation region. Residue serine 193 is modified to Phosphoserine. The span at 220 to 232 (HPTPPPTPVPSPH) shows a compositional bias: pro residues. A phosphothreonine; by GSK3 mark is found at threonine 222 and threonine 226. At serine 230 the chain carries Phosphoserine; by GSK3. Residues 233 to 255 (AAPALGAAGLPGPGSALKGLAGA) are compositionally biased toward low complexity. The interaction with FOXO1 stretch occupies residues 240-359 (AGLPGPGSAL…SLVKAMGNCA (120 aa)). The segment covering 261 to 272 (TGGGGGGSGAGA) has biased composition (gly residues). The span at 277–293 (KSVDKNSNEYRVRRERN) shows a compositional bias: basic and acidic residues. The 64-residue stretch at 283-346 (SNEYRVRRER…DTLRGIFRQL (64 aa)) folds into the bZIP domain. The DNA-binding element occupies 286–301 (YRVRRERNNIAVRKSR). Residues 287-314 (RVRRERNNIAVRKSRDKAKQRNVETQQK) are basic motif. The interval 318-346 (LTSDNDRLRKRVEQLSRELDTLRGIFRQL) is leucine-zipper.

It belongs to the bZIP family. C/EBP subfamily. In terms of assembly, binds DNA as a homodimer and as a heterodimer. Can form stable heterodimers with CEBPB, CEBPD, CEBPE and CEBPG. Interacts with PRDM16. Interacts with UBN1. Interacts with ZNF638; this interaction increases transcriptional activation. Interacts with the complex TFDP2:E2F1; the interaction prevents CEBPA binding to target gene promoters and represses its transcriptional activity. Interacts with RB1. Interacts (when phosphorylated at Ser-193) with CDK2, CDK4, E2F4 and SMARCA2. Interacts with SREBPF1. Interacts with FOXO1 (via the Fork-head domain); the interaction increases when FOXO1 is deacetylated. Interacts with SIX1. Interacts (via recognition sequence) with TRIB1. Interacts (via bZIP domain) with OVOL2 (via zinc-finger domains); the interaction inhibits the transcription factor activity of CEBPA and is required to repress adipogenesis. Interacts with TAF1A and UBTF. As to quaternary structure, interacts with TAF1A and UBTF. Interacts with NPM1. Post-translationally, sumoylated, sumoylation blocks the inhibitory effect on cell proliferation by disrupting the interaction with SMARCA2. In terms of processing, phosphorylation at Ser-193 is required for interaction with CDK2, CDK4 and SWI/SNF complex leading to cell cycle inhibition. Dephosphorylated at Ser-193 by protein phosphatase 2A (PP2A) through PI3K/AKT signaling pathway regulation. Phosphorylation at Thr-222 and Thr-226 by GSK3 is constitutive in adipose tissue and lung. In liver, both Thr-222 and Thr-226 are phosphorylated only during feeding but not during fasting. Phosphorylation of the GSK3 consensus sites selectively decreases transactivation activity on IRE-controlled promoters. Ubiquitinated by COP1 upon interaction with TRIB1. As to expression, isoform 2 and isoform 3 are expressed in adipose tissue and liver (at protein level).

It is found in the nucleus. The protein localises to the nucleolus. Functionally, transcription factor that coordinates proliferation arrest and the differentiation of myeloid progenitors, adipocytes, hepatocytes, and cells of the lung and the placenta. Binds directly to the consensus DNA sequence 5'-T[TG]NNGNAA[TG]-3' acting as an activator on distinct target genes. During early embryogenesis, plays essential and redundant functions with CEBPB. Essential for the transition from common myeloid progenitors (CMP) to granulocyte/monocyte progenitors (GMP). Critical for the proper development of the liver and the lung. Necessary for terminal adipocyte differentiation, is required for postnatal maintenance of systemic energy homeostasis and lipid storage. To regulate these different processes at the proper moment and tissue, interplays with other transcription factors and modulators. Down-regulates the expression of genes that maintain cells in an undifferentiated and proliferative state through E2F1 repression, which is critical for its ability to induce adipocyte and granulocyte terminal differentiation. Reciprocally E2F1 blocks adipocyte differentiation by binding to specific promoters and repressing CEBPA binding to its target gene promoters. Proliferation arrest also depends on a functional binding to SWI/SNF complex. In liver, regulates gluconeogenesis and lipogenesis through different mechanisms. To regulate gluconeogenesis, functionally cooperates with FOXO1 binding to IRE-controlled promoters and regulating the expression of target genes such as PCK1 or G6PC1. To modulate lipogenesis, interacts and transcriptionally synergizes with SREBF1 in promoter activation of specific lipogenic target genes such as ACAS2. In adipose tissue, seems to act as FOXO1 coactivator accessing to ADIPOQ promoter through FOXO1 binding sites. In terms of biological role, can act as dominant-negative. Binds DNA and have transctivation activity, even if much less efficiently than isoform 2. Does not inhibit cell proliferation. Its function is as follows. Directly and specifically enhances ribosomal DNA transcription interacting with RNA polymerase I-specific cofactors and inducing histone acetylation. The protein is CCAAT/enhancer-binding protein alpha of Mus musculus (Mouse).